The following is a 99-amino-acid chain: Nucleoid-associated protein Cj1642 (99 aa).

The protein belongs to the YbaB/EbfC family. Homodimer.

The protein localises to the cytoplasm. Its subcellular location is the nucleoid. Its function is as follows. Binds to DNA and alters its conformation. May be involved in regulation of gene expression, nucleoid organization and DNA protection. This chain is Nucleoid-associated protein Cj1642, found in Campylobacter jejuni subsp. jejuni serotype O:2 (strain ATCC 700819 / NCTC 11168).